We begin with the raw amino-acid sequence, 165 residues long: Sporulation-specific cell division protein SsgB (165 aa).

The disordered stretch occupies residues 1 to 21 (MLVGNSWTRSLEPVSGHEHTE).

The protein belongs to the SsgA family. In terms of assembly, interacts with SsgA. Interacts with FtsZ (via N-terminus).

It is found in the cell septum. In terms of biological role, involved in sporulation-specific cell division. Required for early stages of sporulation. Important in the process of growth cessation prior to sporulation-specific cell division. Recruits cell division protein FtsZ to the future septum sites and tethers the contractile ring structure (Z ring) to the cytoplasmic membrane during sporulation. Stimulates polymerization and filament length of FtsZ in vitro. This is Sporulation-specific cell division protein SsgB from Kineococcus radiotolerans (strain ATCC BAA-149 / DSM 14245 / SRS30216).